We begin with the raw amino-acid sequence, 89 residues long: Small ribosomal subunit protein uS15 (89 aa).

The protein belongs to the universal ribosomal protein uS15 family. As to quaternary structure, part of the 30S ribosomal subunit. Forms a bridge to the 50S subunit in the 70S ribosome, contacting the 23S rRNA.

Functionally, one of the primary rRNA binding proteins, it binds directly to 16S rRNA where it helps nucleate assembly of the platform of the 30S subunit by binding and bridging several RNA helices of the 16S rRNA. Forms an intersubunit bridge (bridge B4) with the 23S rRNA of the 50S subunit in the ribosome. The chain is Small ribosomal subunit protein uS15 from Limosilactobacillus fermentum (strain NBRC 3956 / LMG 18251) (Lactobacillus fermentum).